A 340-amino-acid polypeptide reads, in one-letter code: MGGVAAGTRWIHHVRRLSAAKVSADALERGQSRVIDASLTLIRERAKLKAELLRALGGVKASACLLGVPLGHNSSFLQGPAFAPPRIREAIWCGSTNSSTEEGKELNDPRVLTDVGDVPIQEIRDCGVEDDRLMNVVSESVKTVMEEDPLRPLVLGGDHSISYPVVRAVSEKLGGPVDILHLDAHPDIYDAFEGNIYSHASSFARIMEGGYARRLLQVGIRSITKEGREQGKRFGVEQYEMRTFSKDREKLESLKLGEGVKGVYISVDVDCLDPAFAPGVSHIEPGGLSFRDVLNILHNLQGDVVAGDVVEFNPQRDTVDGMTAMVAAKLVRELTAKISK.

The N-terminal 24 residues, 1 to 24, are a transit peptide targeting the mitochondrion; sequence MGGVAAGTRWIHHVRRLSAAKVSA. The Mn(2+) site is built by histidine 159, aspartate 183, histidine 185, and aspartate 187. Residues 185–189 and 193–195 contribute to the substrate site; these read HPDIY and EGN. Residues aspartate 268 and aspartate 270 each coordinate Mn(2+). Residue glutamate 311 coordinates substrate.

The protein belongs to the arginase family. Requires Mn(2+) as cofactor.

It localises to the mitochondrion. The enzyme catalyses L-arginine + H2O = urea + L-ornithine. It functions in the pathway nitrogen metabolism; urea cycle; L-ornithine and urea from L-arginine: step 1/1. Its function is as follows. Catalyzes the hydrolysis of L-arginine to urea and L-ornithine. The latter can be utilized in the urea cycle or as a precursor for the synthesis of both polyamines and proline. This chain is Arginase 1, mitochondrial (ARG1), found in Oryza sativa subsp. japonica (Rice).